Consider the following 446-residue polypeptide: Histidine--tRNA ligase (446 aa).

Belongs to the class-II aminoacyl-tRNA synthetase family. As to quaternary structure, homodimer.

The protein resides in the cytoplasm. The catalysed reaction is tRNA(His) + L-histidine + ATP = L-histidyl-tRNA(His) + AMP + diphosphate + H(+). This chain is Histidine--tRNA ligase, found in Burkholderia cenocepacia (strain HI2424).